A 279-amino-acid chain; its full sequence is Diaminopimelate epimerase (279 aa).

Residues Asn13 and Asn66 each contribute to the substrate site. Cys75 serves as the catalytic Proton donor. Substrate contacts are provided by residues 76-77 (GN), Asn164, Asn197, and 215-216 (ER). Catalysis depends on Cys224, which acts as the Proton acceptor. Substrate is bound at residue 225 to 226 (GT).

Belongs to the diaminopimelate epimerase family. In terms of assembly, homodimer.

Its subcellular location is the cytoplasm. The enzyme catalyses (2S,6S)-2,6-diaminopimelate = meso-2,6-diaminopimelate. It functions in the pathway amino-acid biosynthesis; L-lysine biosynthesis via DAP pathway; DL-2,6-diaminopimelate from LL-2,6-diaminopimelate: step 1/1. Catalyzes the stereoinversion of LL-2,6-diaminopimelate (L,L-DAP) to meso-diaminopimelate (meso-DAP), a precursor of L-lysine and an essential component of the bacterial peptidoglycan. This Brachyspira hyodysenteriae (strain ATCC 49526 / WA1) protein is Diaminopimelate epimerase.